The sequence spans 181 residues: Adenine phosphoribosyltransferase (181 aa).

This sequence belongs to the purine/pyrimidine phosphoribosyltransferase family. As to quaternary structure, homodimer.

Its subcellular location is the cytoplasm. It carries out the reaction AMP + diphosphate = 5-phospho-alpha-D-ribose 1-diphosphate + adenine. Its pathway is purine metabolism; AMP biosynthesis via salvage pathway; AMP from adenine: step 1/1. Functionally, catalyzes a salvage reaction resulting in the formation of AMP, that is energically less costly than de novo synthesis. The sequence is that of Adenine phosphoribosyltransferase from Brucella abortus (strain S19).